The following is a 61-amino-acid chain: Small ribosomal subunit protein uS14 (61 aa).

Zn(2+)-binding residues include C24, C27, C40, and C43.

Belongs to the universal ribosomal protein uS14 family. Zinc-binding uS14 subfamily. As to quaternary structure, part of the 30S ribosomal subunit. Contacts proteins S3 and S10. The cofactor is Zn(2+).

Binds 16S rRNA, required for the assembly of 30S particles and may also be responsible for determining the conformation of the 16S rRNA at the A site. This Campylobacter hominis (strain ATCC BAA-381 / DSM 21671 / CCUG 45161 / LMG 19568 / NCTC 13146 / CH001A) protein is Small ribosomal subunit protein uS14.